The primary structure comprises 963 residues: Protein translocase subunit SecA (963 aa).

Residues glutamine 87, 105-109, and aspartate 512 contribute to the ATP site; that span reads GEGKT. Disordered regions lie at residues 868–909 and 924–963; these read GPVM…EDFT and QFVG…CHGS. Over residues 874–886 the composition is skewed to acidic residues; it reads PDEEEDGDEDSVE. Cysteine 949, cysteine 951, cysteine 960, and histidine 961 together coordinate Zn(2+).

The protein belongs to the SecA family. Monomer and homodimer. Part of the essential Sec protein translocation apparatus which comprises SecA, SecYEG and auxiliary proteins SecDF. Other proteins may also be involved. Zn(2+) is required as a cofactor.

Its subcellular location is the cell inner membrane. It localises to the cytoplasm. It carries out the reaction ATP + H2O + cellular proteinSide 1 = ADP + phosphate + cellular proteinSide 2.. Part of the Sec protein translocase complex. Interacts with the SecYEG preprotein conducting channel. Has a central role in coupling the hydrolysis of ATP to the transfer of proteins into and across the cell membrane, serving as an ATP-driven molecular motor driving the stepwise translocation of polypeptide chains across the membrane. This chain is Protein translocase subunit SecA, found in Solibacter usitatus (strain Ellin6076).